A 263-amino-acid chain; its full sequence is LIM and SH3 domain protein 1 (263 aa).

An N-acetylmethionine modification is found at Met1. The 61-residue stretch at 3-63 (PNCARCGKIV…NAHYPKQSFT (61 aa)) folds into the LIM zinc-binding domain. Lys42 carries the post-translational modification N6-acetyllysine. 2 Nebulin repeats span residues 64-95 (MVAD…KNKG) and 97-131 (GFSV…KSRM). The residue at position 68 (Thr68) is a Phosphothreonine. Lys75 bears the N6-methyllysine mark. At Ser99 the chain carries Phosphoserine. Residue Thr104 is modified to Phosphothreonine. Residue Lys112 is modified to N6-succinyllysine. Ser118 and Ser134 each carry phosphoserine. The segment at 122–207 (YHEEFEKSRM…QRSAPGGGGK (86 aa)) is disordered. The segment covering 148-162 (DSSSYRRPTEQQQPQ) has biased composition (polar residues). Residues 204–263 (GGGKRYRAVYDYSAADEDEVSFQDGDTIVNVQQIDDGWMYGTVERTGDTGMLPANYVEAI) enclose the SH3 domain.

As to quaternary structure, interacts with F-actin. Interacts with ANKRD54. Interacts with KBTBD10. Phosphorylated. In terms of tissue distribution, expressed in a wide range of tissues (but not the heart or skeletal muscle), the expression is specific for certain actin-rich cell types within these tissues. Expression is prominent in the cortical regions of ion-transporting duct cells in the pancreas, in the salivary parotid gland and in certain F-actin-rich cells in the distal tubule/collecting duct. In primary cultures of gastric fibroblasts, expression is mainly within the tips of lamellipodia and at the leading edges of membrane ruffles.

The protein localises to the cytoplasm. Its subcellular location is the cell cortex. It is found in the cytoskeleton. Plays an important role in the regulation of dynamic actin-based, cytoskeletal activities. Agonist-dependent changes in LASP1 phosphorylation may also serve to regulate actin-associated ion transport activities, not only in the parietal cell but also in certain other F-actin-rich secretory epithelial cell types. The protein is LIM and SH3 domain protein 1 of Rattus norvegicus (Rat).